A 216-amino-acid chain; its full sequence is Large ribosomal subunit protein uL3 (216 aa).

The tract at residues 135 to 156 (LGASHGTQRKHRSPGSIGGCAT) is disordered.

This sequence belongs to the universal ribosomal protein uL3 family. Part of the 50S ribosomal subunit. Forms a cluster with proteins L14 and L19.

In terms of biological role, one of the primary rRNA binding proteins, it binds directly near the 3'-end of the 23S rRNA, where it nucleates assembly of the 50S subunit. The protein is Large ribosomal subunit protein uL3 of Thermobifida fusca (strain YX).